We begin with the raw amino-acid sequence, 485 residues long: Amino acid permease 1 (485 aa).

Over residues 1–15 (MKSFNTEGHNHSTAE) the composition is skewed to polar residues. Residues 1 to 35 (MKSFNTEGHNHSTAESGDAYTVSDPTKNVDEDGRE) are disordered. The Cytoplasmic portion of the chain corresponds to 1–40 (MKSFNTEGHNHSTAESGDAYTVSDPTKNVDEDGREKRTGT). The next 2 membrane-spanning stretches (helical) occupy residues 41–61 (WLTASAHIITAVIGSGVLSLA) and 62–82 (WAIAQLGWIAGTSILLIFSFI). Residues 83–129 (TYFTSTMLADCYRAPDPVTGKRNYTYMDVVRSYLGGRKVQLCGVAQY) lie on the Cytoplasmic side of the membrane. A helical membrane pass occupies residues 130–150 (GNLIGVTVGYTITASISLVAV). Over 151–166 (GKSNCFHDKGHTADCT) the chain is Extracellular. The helical transmembrane segment at 167-187 (ISNYPYMAVFGIIQVILSQIP) threads the bilayer. Residues 188–194 (NFHKLSF) lie on the Cytoplasmic side of the membrane. The helical transmembrane segment at 195 to 215 (LSIMAAVMSFTYATIGIGLAI) threads the bilayer. At 216–245 (ATVAGGKVGKTSMTGTAVGVDVTAAQKIWR) the chain is on the extracellular side. The helical transmembrane segment at 246 to 266 (SFQAVGDIAFAYAYATVLIEI) threads the bilayer. The Cytoplasmic portion of the chain corresponds to 267 to 285 (QDTLRSSPAENKAMKRASL). The helical transmembrane segment at 286–306 (VGVSTTTFFYILCGCIGYAAF) threads the bilayer. Topologically, residues 307 to 318 (GNNAPGDFLTDF) are extracellular. The helical transmembrane segment at 319-339 (GFFEPFWLIDFANACIAVHLI) threads the bilayer. The Cytoplasmic portion of the chain corresponds to 340–394 (GAYQVFAQPIFQFVEKKCNRNYPDNKFITSEYSVNVPFLGKFNISLFRLVWRTAY). A run of 2 helical transmembrane segments spans residues 395–415 (VVITTVVAMIFPFFNAILGLI) and 416–436 (GAASFWPLTVYFPVEMHIAQT). At 437-450 (KIKKYSARWIALKT) the chain is on the cytoplasmic side. The chain crosses the membrane as a helical span at residues 451 to 471 (MCYVCLIVSLLAAAGSIAGLI). Residues 472 to 485 (SSVKTYKPFRTMHE) are Extracellular-facing.

Belongs to the amino acid/polyamine transporter 2 family. Amino acid/auxin permease (AAAP) (TC 2.A.18.2) subfamily. As to expression, highly expressed in developing pods. Found in the endosperm and in the storage parenchyma and the outer epidermis cells of the developing embryo. Lower levels of expression in flowers, in the vascular system of the cotyledon and in the root epidermal cells, including root hairs and throughout the root tip.

Its subcellular location is the cell membrane. Inhibited by carbonylcyanide m-chlorophenylhydrazone and diethylpyrocarbonate (DEPC). Amino acid-proton symporter. Stereospecific transporter with a broad specificity for histidine, glutamate and neutral amino acids. Reduced affinities for asparagine and valine. Involved in amino acid uptake from the apoplastic cavity into the embryo cells for storage protein accumulation and in root amino acid uptake. This is Amino acid permease 1 (AAP1) from Arabidopsis thaliana (Mouse-ear cress).